The chain runs to 455 residues: Bifunctional protein GlmU (455 aa).

The tract at residues 1–226 is pyrophosphorylase; sequence MSLDIVILAA…AMEVQGANDR (226 aa). UDP-N-acetyl-alpha-D-glucosamine-binding positions include 8–11, lysine 22, glutamine 73, 78–79, 99–101, glycine 136, glutamate 151, asparagine 166, and asparagine 224; these read LAAG, GT, and YGD. Aspartate 101 contributes to the Mg(2+) binding site. Residue asparagine 224 participates in Mg(2+) binding. The tract at residues 227 to 247 is linker; that stretch reads RQLSELERHYQLREGRRLMAQ. An N-acetyltransferase region spans residues 248 to 455; that stretch reads GVTLRDPARF…WKRPEKIKKS (208 aa). UDP-N-acetyl-alpha-D-glucosamine is bound by residues arginine 330 and lysine 348. Histidine 360 acts as the Proton acceptor in catalysis. Residues tyrosine 363 and asparagine 374 each contribute to the UDP-N-acetyl-alpha-D-glucosamine site. Residues alanine 377, 383–384, serine 402, alanine 420, and arginine 437 contribute to the acetyl-CoA site; that span reads NY.

The protein in the N-terminal section; belongs to the N-acetylglucosamine-1-phosphate uridyltransferase family. In the C-terminal section; belongs to the transferase hexapeptide repeat family. Homotrimer. It depends on Mg(2+) as a cofactor.

The protein resides in the cytoplasm. The catalysed reaction is alpha-D-glucosamine 1-phosphate + acetyl-CoA = N-acetyl-alpha-D-glucosamine 1-phosphate + CoA + H(+). The enzyme catalyses N-acetyl-alpha-D-glucosamine 1-phosphate + UTP + H(+) = UDP-N-acetyl-alpha-D-glucosamine + diphosphate. It participates in nucleotide-sugar biosynthesis; UDP-N-acetyl-alpha-D-glucosamine biosynthesis; N-acetyl-alpha-D-glucosamine 1-phosphate from alpha-D-glucosamine 6-phosphate (route II): step 2/2. Its pathway is nucleotide-sugar biosynthesis; UDP-N-acetyl-alpha-D-glucosamine biosynthesis; UDP-N-acetyl-alpha-D-glucosamine from N-acetyl-alpha-D-glucosamine 1-phosphate: step 1/1. The protein operates within bacterial outer membrane biogenesis; LPS lipid A biosynthesis. Functionally, catalyzes the last two sequential reactions in the de novo biosynthetic pathway for UDP-N-acetylglucosamine (UDP-GlcNAc). The C-terminal domain catalyzes the transfer of acetyl group from acetyl coenzyme A to glucosamine-1-phosphate (GlcN-1-P) to produce N-acetylglucosamine-1-phosphate (GlcNAc-1-P), which is converted into UDP-GlcNAc by the transfer of uridine 5-monophosphate (from uridine 5-triphosphate), a reaction catalyzed by the N-terminal domain. This is Bifunctional protein GlmU from Pseudomonas putida (strain ATCC 700007 / DSM 6899 / JCM 31910 / BCRC 17059 / LMG 24140 / F1).